The primary structure comprises 863 residues: Bifunctional uridylyltransferase/uridylyl-removing enzyme (863 aa).

Residues 1–328 are uridylyltransferase; it reads MLFPLSLSSP…SSNQATVIEQ (328 aa). The segment at 329–687 is uridylyl-removing; that stretch reads LDDDFQLINQ…ISNRFSLGGT (359 aa). Residues 446–568 form the HD domain; the sequence is VDEHTLRVML…VQNQVRLDYL (123 aa). ACT domains are found at residues 688 to 772 and 794 to 863; these read EVFI…PNRQ and EMEL…RNIG.

It belongs to the GlnD family. Mg(2+) is required as a cofactor.

The catalysed reaction is [protein-PII]-L-tyrosine + UTP = [protein-PII]-uridylyl-L-tyrosine + diphosphate. It catalyses the reaction [protein-PII]-uridylyl-L-tyrosine + H2O = [protein-PII]-L-tyrosine + UMP + H(+). With respect to regulation, uridylyltransferase (UTase) activity is inhibited by glutamine, while glutamine activates uridylyl-removing (UR) activity. Functionally, modifies, by uridylylation and deuridylylation, the PII regulatory proteins (GlnB and homologs), in response to the nitrogen status of the cell that GlnD senses through the glutamine level. Under low glutamine levels, catalyzes the conversion of the PII proteins and UTP to PII-UMP and PPi, while under higher glutamine levels, GlnD hydrolyzes PII-UMP to PII and UMP (deuridylylation). Thus, controls uridylylation state and activity of the PII proteins, and plays an important role in the regulation of nitrogen assimilation and metabolism. The sequence is that of Bifunctional uridylyltransferase/uridylyl-removing enzyme from Haemophilus influenzae (strain PittEE).